The following is a 631-amino-acid chain: ATP-dependent protease PrkA (631 aa).

Thr217 is modified (phosphothreonine). At Ser219 the chain carries Phosphoserine.

This sequence belongs to the PrkA family. Post-translationally, phosphorylated by PrkC on two sites, Thr-217 and Ser-219, with the threonine being the major site of modification.

It is found in the forespore. The protein resides in the spore coat. The catalysed reaction is Hydrolysis of proteins in presence of ATP.. With respect to regulation, hydrolase activity is regulated by phosphorylation by the Ser/Thr kinase PrkC, probably allowing fine control of sporulation. Phosphorylation by PrkC does not prevent ATP fixation but it inhibits specifically PrkA protease activity and down-regulates the sporulation processes. Hydrolase activity is inhibited by a protease inhibitor, phenylmethylsulfonyl fluoride (PMSF). Potential kinase activity requires the presence of MgCl(2) and is inhibited in the presence of MnCl(2). In terms of biological role, ATP-dependent protease that regulates sporulation. Is able to bind and hydrolyze ATP. This ATP-dependent protease activity is necessary for efficient sporulation of B.subtilis. In vitro, can hydrolyze alpha-casein, an exogenous substrate of Lon proteases, in an ATP-dependent manner. PrkA also modulates sporulation by negatively regulating the transcriptional regulator Hpr/ScoC to induce the expression of sigK. The control of sporulation mediated via the Hpr/ScoC regulator is probably indirect. PrkA was originally thought to be a protein kinase, as it has been shown to phosphorylate in vitro an unidentified 60 kDa protein from B.subtilis crude extracts at a serine residue. However, Zhang et al. did not observe autophosphorylation or kinase activity for this protein, suggesting that it may have lost its kinase activity during evolution or may be a pseudokinase. The sequence is that of ATP-dependent protease PrkA from Bacillus subtilis (strain 168).